Here is an 80-residue protein sequence, read N- to C-terminus: CLAVATA3/ESR (CLE)-related protein 4 (80 aa).

The first 22 residues, 1–22 (MASFKLWVCLILLLLEFSVHQC), serve as a signal peptide directing secretion. Residues 55-80 (SKDGQTVLGTLDSKRLSPGGPDPRHH) form a disordered region. Residues Pro-72 and Pro-75 each carry the hydroxyproline modification. A glycan (O-linked (Ara...) hydroxyproline) is linked at Pro-75.

This sequence belongs to the CLV3/ESR signal peptide family. The O-glycosylation (arabinosylation) of the hydroxyproline Pro-75 enhances binding affinity of the CLE4p peptide for its receptor. As to expression, expressed in roots and seedlings.

It is found in the secreted. The protein localises to the extracellular space. Functionally, extracellular signal peptide that regulates cell fate. This Arabidopsis thaliana (Mouse-ear cress) protein is CLAVATA3/ESR (CLE)-related protein 4.